Reading from the N-terminus, the 508-residue chain is MPPLAVLLLALALLCAWRLSYSQGPTGTGTGRPRSLPALPLVGSLLQLAGHPQLHLRLWRLQGRYGSLYGLWMGSHYVVVVNSYQHAREVLLKKGKAFAGRPRTVTTDLLSRGGKDIAFASYGPLWKFQRKLVHAALSMFGEGSVALEKIICREAASLCETLGAAQDMALDMAPELTRAVTNVVCSLCFNSSYRRGDPEFEAMLEYSQGIVDTVAKESLVDIFPWLQIFPNRDLALLKRCLKVRDQLLQQKFTEHKEAFCGDTVRDLMDALLQVRLNAENNSPLEPGLELTDDHLLMTVGDIFGAGVETTTTVLKWAVLYLLHYPEVQKKIQEEMDQKIGLARHPHLSDRPLLPYLEATISEGLRIRPVSPLLIPHVSLADTSIGEYSIPKGARVVINLWSVHHDEKEWDKPEEFNPGRFLDEQGQHIHSPSPSYLPFGAGIRVCLGEVLAKMELFLFLAWVLQRFTLECPQDQPLPSLEGKFGVVLQVQKFRVKARLREAWRGEMVR.

Residue C445 coordinates heme.

This sequence belongs to the cytochrome P450 family. The cofactor is heme.

Its subcellular location is the membrane. The enzyme catalyses a C21-steroid + reduced [NADPH--hemoprotein reductase] + O2 = a 17alpha-hydroxy-C21-steroid + oxidized [NADPH--hemoprotein reductase] + H2O + H(+). The catalysed reaction is 17alpha-hydroxyprogesterone + reduced [NADPH--hemoprotein reductase] + O2 = androst-4-ene-3,17-dione + acetate + oxidized [NADPH--hemoprotein reductase] + H2O + 2 H(+). It catalyses the reaction 17alpha-hydroxypregnenolone + reduced [NADPH--hemoprotein reductase] + O2 = 3beta-hydroxyandrost-5-en-17-one + acetate + oxidized [NADPH--hemoprotein reductase] + H2O + 2 H(+). The protein operates within lipid metabolism; steroid biosynthesis. Its function is as follows. Conversion of pregnenolone and progesterone to their 17-alpha-hydroxylated products and subsequently to dehydroepiandrosterone (DHEA) and androstenedione. Catalyzes both the 17-alpha-hydroxylation and the 17,20-lyase reaction. This Gallus gallus (Chicken) protein is Steroid 17-alpha-hydroxylase/17,20 lyase (CYP17A1).